The following is a 270-amino-acid chain: Hairy and enhancer of split-related protein helt (270 aa).

Positions 1 to 24 (MNARALYKRPPPVSSSQSEASGKR) are disordered. One can recognise a bHLH domain in the interval 59-114 (KTPVSHKVIEKRRRDRINRCLNELGKTVPMALAKQNSGKLEKAEILEMTVQYLRAL). Residues 136-171 (FHYGYHECMKNLVHYLTTVERMETKDTKYARILAFL) form the Orange domain.

The protein belongs to the HEY family.

It localises to the nucleus. Transcriptional repressor which binds preferentially to the canonical E box sequence 5'-CACGCG-3'. The polypeptide is Hairy and enhancer of split-related protein helt (helt) (Danio rerio (Zebrafish)).